Reading from the N-terminus, the 119-residue chain is Acidic phospholipase A2 natratoxin (119 aa).

7 disulfide bridges follow: Cys-11-Cys-71, Cys-26-Cys-118, Cys-28-Cys-44, Cys-43-Cys-99, Cys-50-Cys-92, Cys-60-Cys-85, and Cys-78-Cys-90. Tyr-27, Gly-29, and Gly-31 together coordinate Ca(2+). His-47 is a catalytic residue. Asp-48 is a binding site for Ca(2+). Residue Asp-93 is part of the active site.

Belongs to the phospholipase A2 family. Group I subfamily. D49 sub-subfamily. The cofactor is Ca(2+). As to expression, expressed by the venom gland.

The protein localises to the secreted. It catalyses the reaction a 1,2-diacyl-sn-glycero-3-phosphocholine + H2O = a 1-acyl-sn-glycero-3-phosphocholine + a fatty acid + H(+). Functionally, snake venom phospholipase A2 (PLA2) that has an effectively inhibitory effect on A-type K(+) currents (Kv/KCN) in acutely dissociated rat dorsal root ganglion (DRG) neurons. This inhibitory effect is independent of its enzymatic activity. PLA2 catalyzes the calcium-dependent hydrolysis of the 2-acyl groups in 3-sn-phosphoglycerides. The sequence is that of Acidic phospholipase A2 natratoxin from Naja atra (Chinese cobra).